The primary structure comprises 136 residues: Regulator of nucleoside diphosphate kinase (136 aa).

It belongs to the Rnk family. In terms of assembly, interacts with the RNA polymerase.

In terms of biological role, may act as an anti-Gre factor. This Escherichia coli O6:H1 (strain CFT073 / ATCC 700928 / UPEC) protein is Regulator of nucleoside diphosphate kinase.